The following is a 745-amino-acid chain: VCP-like ATPase (745 aa).

ATP contacts are provided by residues 231-238 (GPPGTGKT) and 508-515 (GPPGVGKT).

It belongs to the AAA ATPase family. CDC48 subfamily. Homohexamer. Forms a ring-shaped particle.

This Thermoplasma acidophilum (strain ATCC 25905 / DSM 1728 / JCM 9062 / NBRC 15155 / AMRC-C165) protein is VCP-like ATPase (vat).